A 591-amino-acid chain; its full sequence is MKTISIFFVIILMSSSHAEDDVLCLKGFKSSLKDPSNQLNTWSFPNSSSSICKLTGVSCWNAKENRILSLQLQSMQLSGQIPESLKLCRSLQSLDLSFNDFSGLIPSQICSWLPYLVTLDLSGNKLSGSIPSQIVDCKFLNSLALNQNKLTGSIPSELTRLNRLQRLSLADNDLSGSIPSELSHYGEDGFRGNGGLCGKPLSNCGSFNGKNLTIIVTAGVIGAVGSLCVGFGMFWWFFIRDRRKMNNYGYGAGKCKDDSDWIGLLRSHKLVQVTLFQKPIVKIKLVDLIEATNGFDSGNIVVSSRSGVSYKADLPDGSTLEVKRLSSCCELSEKQFRSEINKLGQIRHPNLVPLLGFCVVEDEILLVYKHMANGTLYSQLQQWDIDWPTRVRVAVGAARGLAWLHHGCQPLYMHQYISSNVILLDEDFDARVIDYGLGKLVSSQDSKDSSFSNGKFGYVAPEYSSTMVASLSGDVYGFGIVLLEIVTGQKPVLINNGEEGFKESLVEWVSKHLSNGRSKDAIDRRIFGKGYDDEIMQVLRIACSCVVSRPKERPLMIQVYESLKNLGDQHGFFSEYSDEFPLIFNKQEHLK.

The signal sequence occupies residues 1-18 (MKTISIFFVIILMSSSHA). The Extracellular portion of the chain corresponds to 19–218 (EDDVLCLKGF…GKNLTIIVTA (200 aa)). N-linked (GlcNAc...) asparagine glycosylation is present at Asn-46. 5 LRR repeats span residues 66–88 (RILS…LKLC), 90–111 (SLQS…QICS), 115–137 (YLVT…IVDC), 139–162 (FLNS…TRLN), and 163–185 (RLQR…LSHY). A glycan (N-linked (GlcNAc...) asparagine) is linked at Asn-211. Residues 219-239 (GVIGAVGSLCVGFGMFWWFFI) form a helical membrane-spanning segment. Residues 240–591 (RDRRKMNNYG…LIFNKQEHLK (352 aa)) lie on the Cytoplasmic side of the membrane. At Thr-292 the chain carries Phosphothreonine. The region spanning 295–573 (FDSGNIVVSS…KNLGDQHGFF (279 aa)) is the Protein kinase domain. ATP is bound by residues 301–309 (VVSSRSGVS) and Lys-323. A Phosphoserine modification is found at Ser-378. Thr-389 bears the Phosphothreonine mark. The residue at position 463 (Tyr-463) is a Phosphotyrosine. Phosphoserine is present on Ser-465. Thr-466 carries the post-translational modification Phosphothreonine. Position 470 is a phosphoserine (Ser-470).

It belongs to the protein kinase superfamily. Ser/Thr protein kinase family.

The protein resides in the membrane. It carries out the reaction L-seryl-[protein] + ATP = O-phospho-L-seryl-[protein] + ADP + H(+). It catalyses the reaction L-threonyl-[protein] + ATP = O-phospho-L-threonyl-[protein] + ADP + H(+). The protein is Probable LRR receptor-like serine/threonine-protein kinase At1g69990 of Arabidopsis thaliana (Mouse-ear cress).